The chain runs to 149 residues: Nucleoside diphosphate kinase (149 aa).

Residues Lys-9, Phe-57, Arg-85, Thr-91, Arg-102, and Asn-112 each contribute to the ATP site. His-115 acts as the Pros-phosphohistidine intermediate in catalysis.

Belongs to the NDK family. As to quaternary structure, homotetramer. The cofactor is Mg(2+).

The protein localises to the cytoplasm. The catalysed reaction is a 2'-deoxyribonucleoside 5'-diphosphate + ATP = a 2'-deoxyribonucleoside 5'-triphosphate + ADP. It catalyses the reaction a ribonucleoside 5'-diphosphate + ATP = a ribonucleoside 5'-triphosphate + ADP. Major role in the synthesis of nucleoside triphosphates other than ATP. The ATP gamma phosphate is transferred to the NDP beta phosphate via a ping-pong mechanism, using a phosphorylated active-site intermediate. The polypeptide is Nucleoside diphosphate kinase (Nostoc sp. (strain PCC 7120 / SAG 25.82 / UTEX 2576)).